The following is a 170-amino-acid chain: Thialysine N-epsilon-acetyltransferase (170 aa).

One can recognise an N-acetyltransferase domain in the interval 4 to 166 (VMIREAKEGD…FRFEGEAMRE (163 aa)). Residue 27 to 28 (YE) coordinates substrate. N6-acetyllysine is present on Lys29. Glu92 lines the substrate pocket. Acetyl-CoA is bound by residues 94–96 (IYV), 102–107 (GQGIGS), 133–135 (NKR), and Tyr140. Catalysis depends on Tyr140, which acts as the Proton donor. Glu152 serves as a coordination point for substrate.

The protein belongs to the acetyltransferase family. Homodimer.

It localises to the cytoplasm. It catalyses the reaction S-(2-aminoethyl)-L-cysteine + acetyl-CoA = S-(2-acetamidoethyl)-L-cysteine + CoA + H(+). The catalysed reaction is an alkane-alpha,omega-diamine + acetyl-CoA = an N-acetylalkane-alpha,omega-diamine + CoA + H(+). Functionally, catalyzes the N-acetylation of the amino acid thialysine (S-(2-aminoethyl)-L-cysteine), a L-lysine analog with the 4-methylene group substituted with a sulfur. May also catalyze acetylation of polyamines, such as norspermidine, spermidine or spermine. However, ability to acetylate polyamines is weak, suggesting that it does not act as a diamine acetyltransferase in vivo. The chain is Thialysine N-epsilon-acetyltransferase from Bos taurus (Bovine).